Here is a 612-residue protein sequence, read N- to C-terminus: tRNA(Met) cytidine acetyltransferase TmcA (612 aa).

Residues Gln136, Gly161–Gln170, and Arg284 contribute to the ATP site. In terms of domain architecture, N-acetyltransferase spans Lys319–Thr499. Ile424 to Val426 provides a ligand contact to acetyl-CoA.

It belongs to the RNA cytidine acetyltransferase family. TmcA subfamily.

Its subcellular location is the cytoplasm. The catalysed reaction is cytidine(34) in elongator tRNA(Met) + acetyl-CoA + ATP + H2O = N(4)-acetylcytidine(34) in elongator tRNA(Met) + ADP + phosphate + CoA + H(+). Catalyzes the formation of N(4)-acetylcytidine (ac(4)C) at the wobble position of tRNA(Met), by using acetyl-CoA as an acetyl donor and ATP (or GTP). This chain is tRNA(Met) cytidine acetyltransferase TmcA, found in Idiomarina loihiensis (strain ATCC BAA-735 / DSM 15497 / L2-TR).